A 455-amino-acid polypeptide reads, in one-letter code: 1,4-beta-D-glucan cellobiohydrolase C (455 aa).

An N-terminal signal peptide occupies residues 1-19 (MHYSASGLALAFLLPAIQA). A CBM1 domain is found at 20–55 (QQTLYGQCGGSGWTGATSCVAGAACSTLNQWYAQCL). Disulfide bonds link C27–C44 and C38–C54. Positions 59-92 (TTTSTTLTTTTSSVTTTSNPGSTTTTSSVTVTAT) are thr-rich linker. Residues 66–86 (TTTTSSVTTTSNPGSTTTTSS) are disordered. The segment at 93-450 (ASGNPFSGYQ…QAYFVQLLQN (358 aa)) is catalytic. Residue D185 is part of the active site. Cystine bridges form between C186–C245 and C377–C424. Catalysis depends on D231, which acts as the Proton donor. The active-site Nucleophile is D410.

This sequence belongs to the glycosyl hydrolase 6 (cellulase B) family.

The protein localises to the secreted. The enzyme catalyses Hydrolysis of (1-&gt;4)-beta-D-glucosidic linkages in cellulose and cellotetraose, releasing cellobiose from the non-reducing ends of the chains.. The biological conversion of cellulose to glucose generally requires three types of hydrolytic enzymes: (1) Endoglucanases which cut internal beta-1,4-glucosidic bonds; (2) Exocellobiohydrolases that cut the disaccharide cellobiose from the non-reducing end of the cellulose polymer chain; (3) Beta-1,4-glucosidases which hydrolyze the cellobiose and other short cello-oligosaccharides to glucose. Active against carboxymethylcellulose, beta-glucan and lichenan. The protein is 1,4-beta-D-glucan cellobiohydrolase C (cbhC) of Emericella nidulans (strain FGSC A4 / ATCC 38163 / CBS 112.46 / NRRL 194 / M139) (Aspergillus nidulans).